Here is a 149-residue protein sequence, read N- to C-terminus: Large ribosomal subunit protein bL9 (149 aa).

This sequence belongs to the bacterial ribosomal protein bL9 family.

In terms of biological role, binds to the 23S rRNA. This Geobacillus sp. (strain WCH70) protein is Large ribosomal subunit protein bL9.